A 161-amino-acid chain; its full sequence is Large ribosomal subunit protein uL15 (161 aa).

Positions 1 to 43 (MKLSDIADNAGSRKKRMRIGRGIGSGKGKTGGRGGKGQTARSG) are disordered. Over residues 21–37 (RGIGSGKGKTGGRGGKG) the composition is skewed to gly residues.

This sequence belongs to the universal ribosomal protein uL15 family. Part of the 50S ribosomal subunit.

In terms of biological role, binds to the 23S rRNA. This chain is Large ribosomal subunit protein uL15, found in Nitrobacter hamburgensis (strain DSM 10229 / NCIMB 13809 / X14).